Consider the following 311-residue polypeptide: Putative mitochondrial transporter UCP3 (311 aa).

Over 1–10 (MVGLQPSERP) the chain is Mitochondrial intermembrane. The helical transmembrane segment at 11-32 (PTTSVKFLAAGTAACFADLLTF) threads the bilayer. 3 Solcar repeats span residues 11–105 (PTTS…VKQF), 114–205 (SSII…IKEK), and 214–299 (DNFP…MKRA). Topologically, residues 33–76 (PLDTAKVRLQIQGENQAALAARSAQYRGVLGTILTMVRTEGPRS) are mitochondrial matrix. Residues 77–99 (LYSGLVAGLQRQMSFASIRIGLY) form a helical membrane-spanning segment. Residues 100-119 (DSVKQFYTPKGSDHSSIITR) lie on the Mitochondrial intermembrane side of the membrane. The chain crosses the membrane as a helical span at residues 120 to 136 (ILAGCTTGAMAVTCAQP). The Mitochondrial matrix segment spans residues 137–182 (TDVVKIRFQASMHTGLGGNRKYSGTMDAYRTIAREEGVRGLWKGIL). A helical membrane pass occupies residues 183–199 (PNITRNAIVNCGEMVTY). The Mitochondrial intermembrane segment spans residues 200–216 (DIIKEKLLDYHLLTDNF). Residues 217 to 236 (PCHFVSAFGAGFCATLVASP) form a helical membrane-spanning segment. The Mitochondrial matrix portion of the chain corresponds to 237–270 (VDVVKTRYMNSPPGQYHSPFDCMLKMVTQEGPTA). A helical membrane pass occupies residues 271–293 (FYKGFTPSFLRLGSWNVVMFVTY). A purine nucleotide binding region spans residues 278–300 (SFLRLGSWNVVMFVTYEQMKRAL). At 294 to 311 (EQMKRALMKVQMLRDSPF) the chain is on the mitochondrial intermembrane side.

The protein belongs to the mitochondrial carrier (TC 2.A.29) family. In terms of assembly, interacts with HAX1; the interaction is direct and calcium-dependent.

Its subcellular location is the mitochondrion inner membrane. In terms of biological role, putative transmembrane transporter that plays a role in mitochondrial metabolism via an as yet unclear mechanism. Originally, this mitochondrial protein was thought to act as a proton transmembrane transporter from the mitochondrial intermembrane space into the matrix, causing proton leaks through the inner mitochondrial membrane, thereby uncoupling mitochondrial membrane potential generation from ATP synthesis. However, this function is controversial and uncoupling may not be the function, or at least not the main function, but rather a consequence of more conventional metabolite transporter activity. The chain is Putative mitochondrial transporter UCP3 from Bos taurus (Bovine).